Reading from the N-terminus, the 134-residue chain is Probable RNA-binding protein MJ0652 (134 aa).

Positions 11–108 (RKLTGKMKRM…REGWKKYLAK (98 aa)) constitute a CRM domain.

This Methanocaldococcus jannaschii (strain ATCC 43067 / DSM 2661 / JAL-1 / JCM 10045 / NBRC 100440) (Methanococcus jannaschii) protein is Probable RNA-binding protein MJ0652.